The following is a 176-amino-acid chain: Skp1-related protein (176 aa).

This sequence belongs to the SKP1 family. As to quaternary structure, probable component of the SCF(sel-10) E3 ubiquitin-protein ligase complex containing F-box domain-containing protein sel-10 as the substrate recognition component. Interacts with cul-1. May interact with the F-box protein mec-15. Interacts with dre-1. Interacts with syg-1. Interacts with sel-10. Ubiquitously expressed in the adult.

Functionally, probable essential component of SCF (SKP1-CUL1-F-box protein) E3 ubiquitin-protein ligase complexes, which mediate the ubiquitination and subsequent proteasomal degradation of target proteins. Regulates cell proliferation during embryonic and larval development. Involved in synapse elimination in early synapse development. May negatively regulate the apoptotic activity of cep-1 in response to genotoxic stress. Plays a role in sex determination. The chain is Skp1-related protein from Caenorhabditis elegans.